Reading from the N-terminus, the 202-residue chain is MNTHYLTINLLRAIAFGLAYSILEVNVPLFHYIPVVDYRVFYLIIFAIANMTLPLSLFLGNFFLSMASEDMFYWIIKAQTPFQYAWYYPVIDGIPIADVIEVIISVFSYYYYVRHHNETTNIFHFIFVDTDNTSSSQQQQCGMWYAFTHGKAHDEYGALTLVLVSVLAILSSHSLSLTAFATLSLIVGTGIFVDLWAHCFHH.

Transmembrane regions (helical) follow at residues 13-33 (AIAF…FHYI), 40-60 (VFYL…LFLG), 87-107 (YYPV…ISVF), 156-176 (YGAL…HSLS), and 177-197 (LTAF…DLWA).

It is found in the host membrane. The protein is Putative transmembrane protein ORF202 of Acidianus filamentous virus 2 (isolate Italy/Pozzuoli) (AFV-2).